Reading from the N-terminus, the 90-residue chain is Small ribosomal subunit protein uS15 (90 aa).

Belongs to the universal ribosomal protein uS15 family. Part of the 30S ribosomal subunit. Forms a bridge to the 50S subunit in the 70S ribosome, contacting the 23S rRNA.

One of the primary rRNA binding proteins, it binds directly to 16S rRNA where it helps nucleate assembly of the platform of the 30S subunit by binding and bridging several RNA helices of the 16S rRNA. In terms of biological role, forms an intersubunit bridge (bridge B4) with the 23S rRNA of the 50S subunit in the ribosome. This chain is Small ribosomal subunit protein uS15, found in Helicobacter pylori (strain J99 / ATCC 700824) (Campylobacter pylori J99).